The primary structure comprises 589 residues: Sulfite reductase [NADPH] hemoprotein beta-component (589 aa).

Residues Cys443, Cys449, Cys488, and Cys492 each contribute to the [4Fe-4S] cluster site. Cys492 lines the siroheme pocket.

It belongs to the nitrite and sulfite reductase 4Fe-4S domain family. Alpha(8)-beta(8). The alpha component is a flavoprotein, the beta component is a hemoprotein. The cofactor is siroheme. It depends on [4Fe-4S] cluster as a cofactor.

The catalysed reaction is hydrogen sulfide + 3 NADP(+) + 3 H2O = sulfite + 3 NADPH + 4 H(+). It functions in the pathway sulfur metabolism; hydrogen sulfide biosynthesis; hydrogen sulfide from sulfite (NADPH route): step 1/1. Its function is as follows. Component of the sulfite reductase complex that catalyzes the 6-electron reduction of sulfite to sulfide. This is one of several activities required for the biosynthesis of L-cysteine from sulfate. This Neisseria meningitidis serogroup C / serotype 2a (strain ATCC 700532 / DSM 15464 / FAM18) protein is Sulfite reductase [NADPH] hemoprotein beta-component.